The sequence spans 1529 residues: ABC multidrug transporter AFR2 (1529 aa).

One can recognise an ABC transporter 1 domain in the interval 144 to 394 (GSLRDLIGNR…FVDMGFHCPS (251 aa)). N-linked (GlcNAc...) asparagine glycosylation is found at Asn235 and Asn318. 5 helical membrane-spanning segments follow: residues 510 to 530 (LFGNFIMALIIGSVFYNLPVT), 539 to 559 (ALLFFAILMSAFGSALEILIL), 589 to 609 (IPYKVMNCIIFNLTLYFMTNL), 614 to 634 (GAYFFFMLISFTLTMVMSMLF), and 648 to 668 (LAPAALLILGLVMYTGFAVNV). Asn742 carries N-linked (GlcNAc...) asparagine glycosylation. A helical membrane pass occupies residues 757–777 (GILIGFFLFFTAIYLTATEFI). The ABC transporter 2 domain occupies 845–1087 (FSWKDVVYDI…ILIDYFEKNG (243 aa)). 881 to 888 (GVSGAGKT) contributes to the ATP binding site. 5 helical membrane passes run 1193–1213 (YIWAKVALCSLSGLFIGFSFF), 1229–1249 (VFMMFTIFGQLTQQIMPNFVT), 1268–1288 (IFILSNIVSEIPWAILMGVII), 1314–1334 (LMFLYIEMFLLFNATFSIMIV), and 1353–1373 (MCLIFCGVLASGSSLPGFWVF). A glycan (N-linked (GlcNAc...) asparagine) is linked at Asn1434. A helical membrane pass occupies residues 1465-1485 (FGLLWVYVVFNVIAAIGIYWL). Residues 1493-1505 (GKERASEPEDVQE) are compositionally biased toward basic and acidic residues. Residues 1493–1529 (GKERASEPEDVQEKQVPAQSTEKKYQSISRSSESTVA) form a disordered region. Residues 1518–1529 (QSISRSSESTVA) are compositionally biased toward polar residues.

This sequence belongs to the ABC transporter superfamily. ABCG family. PDR (TC 3.A.1.205) subfamily.

The protein resides in the cell membrane. It catalyses the reaction itraconazole(in) + ATP + H2O = itraconazole(out) + ADP + phosphate + H(+). The enzyme catalyses voriconazole(in) + ATP + H2O = voriconazole(out) + ADP + phosphate + H(+). It carries out the reaction fluconazole(in) + ATP + H2O = fluconazole(out) + ADP + phosphate + H(+). In terms of biological role, pleiotropic ABC efflux transporter that confers resistance to structurally and functionally unrelated compounds including azoles such as fluconazole (FLC), itraconazole (ITC), posaconazole (POS), and voriconazole (VRC). This Cryptococcus deuterogattii (strain R265) (Cryptococcus gattii VGII (strain R265)) protein is ABC multidrug transporter AFR2.